The chain runs to 72 residues: Translation initiation factor IF-1 (72 aa).

The S1-like domain maps to 1–72 (MAREDLIEVE…SRGRITYRKK (72 aa)).

This sequence belongs to the IF-1 family. In terms of assembly, component of the 30S ribosomal translation pre-initiation complex which assembles on the 30S ribosome in the order IF-2 and IF-3, IF-1 and N-formylmethionyl-tRNA(fMet); mRNA recruitment can occur at any time during PIC assembly.

It is found in the cytoplasm. In terms of biological role, one of the essential components for the initiation of protein synthesis. Stabilizes the binding of IF-2 and IF-3 on the 30S subunit to which N-formylmethionyl-tRNA(fMet) subsequently binds. Helps modulate mRNA selection, yielding the 30S pre-initiation complex (PIC). Upon addition of the 50S ribosomal subunit IF-1, IF-2 and IF-3 are released leaving the mature 70S translation initiation complex. This is Translation initiation factor IF-1 from Acholeplasma laidlawii (strain PG-8A).